The following is a 483-amino-acid chain: Glutamate--tRNA ligase (483 aa).

Positions 11–21 (PSPTGHLHIGN) match the 'HIGH' region motif. Zn(2+) is bound by residues Cys108, Cys110, His135, and Asp137. The 'KMSKS' region motif lies at 252–256 (KLSKR). ATP is bound at residue Lys255.

Belongs to the class-I aminoacyl-tRNA synthetase family. Glutamate--tRNA ligase type 1 subfamily. As to quaternary structure, monomer. It depends on Zn(2+) as a cofactor.

The protein localises to the cytoplasm. The catalysed reaction is tRNA(Glu) + L-glutamate + ATP = L-glutamyl-tRNA(Glu) + AMP + diphosphate. In terms of biological role, catalyzes the attachment of glutamate to tRNA(Glu) in a two-step reaction: glutamate is first activated by ATP to form Glu-AMP and then transferred to the acceptor end of tRNA(Glu). The chain is Glutamate--tRNA ligase from Bacillus subtilis (strain 168).